A 319-amino-acid chain; its full sequence is Putative replication factor C small subunit R395 (319 aa).

An ATP-binding site is contributed by 45–52 (GSPGVGKT).

Belongs to the activator 1 small subunits family. RfcS subfamily.

Its function is as follows. Part of the RFC clamp loader complex which loads the PCNA sliding clamp onto DNA. The polypeptide is Putative replication factor C small subunit R395 (Acanthamoeba polyphaga mimivirus (APMV)).